Consider the following 159-residue polypeptide: GDP-mannose mannosyl hydrolase (159 aa).

Substrate-binding positions include Phe2–Leu3, Phe8, and Arg36. The 141-residue stretch at Arg13–Arg153 folds into the Nudix hydrolase domain. Residues Gly49, Glu69, and Gln122 each contribute to the Mg(2+) site. The Nudix box motif lies at Gly50–Gly71.

It belongs to the Nudix hydrolase family. In terms of assembly, homodimer. Requires Mg(2+) as cofactor.

It carries out the reaction GDP-alpha-D-mannose + H2O = D-mannose + GDP + H(+). Its function is as follows. Hydrolyzes GDP-mannose. The chain is GDP-mannose mannosyl hydrolase from Escherichia coli O157:H7.